The sequence spans 147 residues: D-aminoacyl-tRNA deacylase (147 aa).

Positions 136 to 137 (GP) match the Gly-cisPro motif, important for rejection of L-amino acids motif.

The protein belongs to the DTD family. In terms of assembly, homodimer.

It localises to the cytoplasm. It catalyses the reaction glycyl-tRNA(Ala) + H2O = tRNA(Ala) + glycine + H(+). The enzyme catalyses a D-aminoacyl-tRNA + H2O = a tRNA + a D-alpha-amino acid + H(+). Its function is as follows. An aminoacyl-tRNA editing enzyme that deacylates mischarged D-aminoacyl-tRNAs. Also deacylates mischarged glycyl-tRNA(Ala), protecting cells against glycine mischarging by AlaRS. Acts via tRNA-based rather than protein-based catalysis; rejects L-amino acids rather than detecting D-amino acids in the active site. By recycling D-aminoacyl-tRNA to D-amino acids and free tRNA molecules, this enzyme counteracts the toxicity associated with the formation of D-aminoacyl-tRNA entities in vivo and helps enforce protein L-homochirality. This Streptococcus equi subsp. zooepidemicus (strain MGCS10565) protein is D-aminoacyl-tRNA deacylase.